Here is a 124-residue protein sequence, read N- to C-terminus: Small ribosomal subunit protein bS6 (124 aa).

The tract at residues 96 to 124 (ETGPSPMMKEVQREEAKKAAAAQPTEAQA) is disordered. The segment covering 114 to 124 (AAAAQPTEAQA) has biased composition (low complexity).

This sequence belongs to the bacterial ribosomal protein bS6 family.

Its function is as follows. Binds together with bS18 to 16S ribosomal RNA. The chain is Small ribosomal subunit protein bS6 from Burkholderia mallei (strain ATCC 23344).